The primary structure comprises 694 residues: Elongation factor G (694 aa).

The tr-type G domain maps to 8–287 (EDYRNFGIMA…AVVEFLPAPT (280 aa)). GTP is bound by residues 17–24 (AHIDAGKT), 86–90 (DTPGH), and 140–143 (NKMD).

It belongs to the TRAFAC class translation factor GTPase superfamily. Classic translation factor GTPase family. EF-G/EF-2 subfamily.

Its subcellular location is the cytoplasm. Its function is as follows. Catalyzes the GTP-dependent ribosomal translocation step during translation elongation. During this step, the ribosome changes from the pre-translocational (PRE) to the post-translocational (POST) state as the newly formed A-site-bound peptidyl-tRNA and P-site-bound deacylated tRNA move to the P and E sites, respectively. Catalyzes the coordinated movement of the two tRNA molecules, the mRNA and conformational changes in the ribosome. The polypeptide is Elongation factor G (Brucella suis (strain ATCC 23445 / NCTC 10510)).